The following is a 385-amino-acid chain: Putative RNA methyltransferase YpsC (385 aa).

The region spanning 44 to 156 (AICRANLWLR…KDQALITLDS (113 aa)) is the THUMP domain.

It belongs to the methyltransferase superfamily. As to quaternary structure, interacts with the RNA polymerase core.

This is Putative RNA methyltransferase YpsC (ypsC) from Bacillus subtilis (strain 168).